We begin with the raw amino-acid sequence, 133 residues long: Putative pre-16S rRNA nuclease (133 aa).

The protein belongs to the YqgF nuclease family.

The protein localises to the cytoplasm. Could be a nuclease involved in processing of the 5'-end of pre-16S rRNA. In Bordetella pertussis (strain Tohama I / ATCC BAA-589 / NCTC 13251), this protein is Putative pre-16S rRNA nuclease.